The sequence spans 201 residues: MFPEQQKEEFVSVWVRDPRIQKEDFWHSYIDYEICIHTNSMCFTMKTSCVRRRYREFVWLRQRLQSNALLVQLPELPSKNLFFNMNNRQHVDQRRQGLEDFLRKVLQNALLLSDSSLHLFLQSHLNSEDIEACVSGQTKYSVEEAIHKFALMNRRFPEEEEEGKKDADVEYDSESSSSGLGHSSDDSSSHGCKTSPALQES.

Positions 8 to 125 (EEFVSVWVRD…SLHLFLQSHL (118 aa)) are required for interaction with ATP6V1D. A PX domain is found at 10-127 (FVSVWVRDPR…HLFLQSHLNS (118 aa)). The a 1,2-diacyl-sn-glycero-3-phospho-(1D-myo-inositol-3-phosphate) site is built by arginine 53, lysine 79, and arginine 94. Residues 155-201 (RFPEEEEEGKKDADVEYDSESSSSGLGHSSDDSSSHGCKTSPALQES) form a disordered region.

Belongs to the sorting nexin family. Interacts with ATP6V1D; may play a role in ciliogenesis. In terms of tissue distribution, expressed in femur, calvariae and teeth.

Its subcellular location is the cytoplasm. It is found in the endosome membrane. The protein resides in the cytoskeleton. The protein localises to the microtubule organizing center. It localises to the centrosome. Probable phosphoinositide-binding protein involved in protein sorting and membrane trafficking in endosomes. Plays a role in cilium biogenesis through regulation of the transport and the localization of proteins to the cilium. Required for the localization to the cilium of V-ATPase subunit ATP6V1D and ATP6V0D1, and RAB8A. Involved in osteoclast differentiation and therefore bone resorption. The protein is Sorting nexin-10 (Snx10) of Mus musculus (Mouse).